Here is a 189-residue protein sequence, read N- to C-terminus: Elongation factor P (189 aa).

Belongs to the elongation factor P family.

It localises to the cytoplasm. The protein operates within protein biosynthesis; polypeptide chain elongation. Functionally, involved in peptide bond synthesis. Stimulates efficient translation and peptide-bond synthesis on native or reconstituted 70S ribosomes in vitro. Probably functions indirectly by altering the affinity of the ribosome for aminoacyl-tRNA, thus increasing their reactivity as acceptors for peptidyl transferase. The protein is Elongation factor P of Xanthobacter autotrophicus (strain ATCC BAA-1158 / Py2).